We begin with the raw amino-acid sequence, 110 residues long: Insulin-1 (110 aa).

An N-terminal signal peptide occupies residues 1–24; it reads MALWMRFLPLLALLVLWEPKPAQA. Disulfide bonds link C31–C96, C43–C109, and C95–C100. Residues 57 to 87 constitute a propeptide, c peptide; sequence EVEDPQVPQLELGGGPEAGDLQTLALEVARQ.

Belongs to the insulin family. In terms of assembly, heterodimer of a B chain and an A chain linked by two disulfide bonds.

It is found in the secreted. Functionally, insulin decreases blood glucose concentration. It increases cell permeability to monosaccharides, amino acids and fatty acids. It accelerates glycolysis, the pentose phosphate cycle, and glycogen synthesis in liver. This is Insulin-1 (Ins1) from Rattus norvegicus (Rat).